The sequence spans 180 residues: ATP-dependent protease subunit HslV (180 aa).

Residue threonine 5 is part of the active site. Na(+)-binding residues include glycine 165, cysteine 168, and threonine 171.

The protein belongs to the peptidase T1B family. HslV subfamily. A double ring-shaped homohexamer of HslV is capped on each side by a ring-shaped HslU homohexamer. The assembly of the HslU/HslV complex is dependent on binding of ATP.

The protein resides in the cytoplasm. The enzyme catalyses ATP-dependent cleavage of peptide bonds with broad specificity.. With respect to regulation, allosterically activated by HslU binding. In terms of biological role, protease subunit of a proteasome-like degradation complex believed to be a general protein degrading machinery. This is ATP-dependent protease subunit HslV from Helicobacter acinonychis (strain Sheeba).